A 315-amino-acid polypeptide reads, in one-letter code: GTP cyclohydrolase MptA (315 aa).

This sequence belongs to the GTP cyclohydrolase IV family. As to quaternary structure, homodimer. It depends on Fe(2+) as a cofactor.

It carries out the reaction GTP + H2O = 7,8-dihydroneopterin 2',3'-cyclic phosphate + formate + diphosphate + H(+). The protein operates within cofactor biosynthesis; 5,6,7,8-tetrahydromethanopterin biosynthesis. In terms of biological role, converts GTP to 7,8-dihydro-D-neopterin 2',3'-cyclic phosphate, the first intermediate in the biosynthesis of coenzyme methanopterin. The protein is GTP cyclohydrolase MptA of Methanococcus maripaludis (strain C6 / ATCC BAA-1332).